Reading from the N-terminus, the 85-residue chain is MEEIIDVKNPKEVIEYLNNIDVDEYVEIYFGRVHVEGRLMHYNDGLIRLVHEKYGIIEVEIEKILDDLLELVHSNGEKRVVLRFY.

This is an uncharacterized protein from Methanocaldococcus jannaschii (strain ATCC 43067 / DSM 2661 / JAL-1 / JCM 10045 / NBRC 100440) (Methanococcus jannaschii).